The sequence spans 192 residues: Thymidylate kinase (192 aa).

Residue 7 to 14 (GIDCVGKS) participates in ATP binding.

Belongs to the thymidylate kinase family.

It catalyses the reaction dTMP + ATP = dTDP + ADP. In terms of biological role, phosphorylation of dTMP to form dTDP in both de novo and salvage pathways of dTTP synthesis. This Campylobacter jejuni subsp. jejuni serotype O:2 (strain ATCC 700819 / NCTC 11168) protein is Thymidylate kinase (tmk).